The chain runs to 259 residues: Leucine-rich repeat-containing protein 3B (259 aa).

Positions 1 to 33 (MNLVDLWLTRSLSMCLLLQSFVLMILCFHSASM) are cleaved as a signal peptide. The LRRNT domain maps to 34–64 (CPKGCLCSSSGGLNVTCSNANLKEIPRDLPP). N-linked (GlcNAc...) asparagine glycosylation is present at asparagine 47. LRR repeat units lie at residues 65-86 (ETVL…IFKD), 89-110 (QLRV…AFKG), and 114-135 (TLQT…AFNN). The N-linked (GlcNAc...) asparagine glycan is linked to asparagine 94. An LRRCT domain is found at 145–197 (NPWHCDCTLQQVLRSMVSNHETAHNVICKTSVLDEHAGRPFLNAANDADLCNL). A helical membrane pass occupies residues 205–225 (AMLVTMFGWFTMVISYVVYYV).

The protein belongs to the LRRC3 family.

The protein localises to the membrane. The sequence is that of Leucine-rich repeat-containing protein 3B (LRRC3B) from Bos taurus (Bovine).